Consider the following 379-residue polypeptide: Probable G-protein coupled receptor 27 (379 aa).

The Extracellular portion of the chain corresponds to 1–26; sequence MANASEPGGGGSGGGAEAAALGLRLA. Asn3 is a glycosylation site (N-linked (GlcNAc...) asparagine). The helical transmembrane segment at 27–47 threads the bilayer; it reads TLSLLLCVSLAGNVLFALLIV. Over 48–58 the chain is Cytoplasmic; the sequence is RERSLHRAPYY. The helical transmembrane segment at 59–79 threads the bilayer; it reads LLLDLCLADGLRALACLPAVM. The Extracellular portion of the chain corresponds to 80 to 100; it reads LAARRAAAAAGTPPGALGCKL. A disulfide bond links Cys98 and Cys175. A helical membrane pass occupies residues 101-121; sequence LAFLAALFCFHAAFLLLGVGV. Residues 122–142 lie on the Cytoplasmic side of the membrane; that stretch reads TRYLAIAHHRFYAERLAGWPC. The chain crosses the membrane as a helical span at residues 143-163; that stretch reads AAMLVCAAWALALAAAFPPVL. At 164 to 185 the chain is on the extracellular side; that stretch reads DGGGADDEDAPCALEQRPDGAP. A helical membrane pass occupies residues 186–206; the sequence is GALGFLLLLAAVVGATHLVYL. The Cytoplasmic portion of the chain corresponds to 207–289; the sequence is RLLFFIHDRR…FKTEKRLCKM (83 aa). Residues 290–310 form a helical membrane-spanning segment; sequence FYAITLLFLLLWGPYVVASYL. The Extracellular portion of the chain corresponds to 311–324; sequence RVLVRPGAVPQAYL. Residues 325-345 traverse the membrane as a helical segment; that stretch reads TASVWLTFAQAGINPVVCFLF. Residues 346-379 lie on the Cytoplasmic side of the membrane; that stretch reads NRELRDCFRAQFPCCQSPQATQATLPCDLKGIGL.

Belongs to the G-protein coupled receptor 1 family.

The protein resides in the cell membrane. Orphan receptor. Possible candidate for amine-like G-protein coupled receptor. This Mus musculus (Mouse) protein is Probable G-protein coupled receptor 27 (Gpr27).